The primary structure comprises 481 residues: Abietadienol/abietadienal oxidase (481 aa).

A helical transmembrane segment spans residues alanine 2–isoleucine 22. Heme is bound at residue cysteine 430.

Belongs to the cytochrome P450 family. Heme is required as a cofactor. In terms of tissue distribution, expressed in young tissues such as flushing buds and green bark tissues. Lower levels in mature needles and bark.

The protein resides in the membrane. It catalyses the reaction abieta-7,13-dien-18-ol + 2 reduced [NADPH--hemoprotein reductase] + 2 O2 = abieta-7,13-dien-18-oate + 2 oxidized [NADPH--hemoprotein reductase] + 3 H2O + 3 H(+). Multifunctional and multisubstrate cytochrome P450 that oxidizes the respective carbon 18 of abietadienol, abietadienal, levopimaradienol, isopimara-7,15-dienol, isopimara-7,15-dienal, dehydroabietadienol, and dehydroabietadienal. This is Abietadienol/abietadienal oxidase (CYP720B1) from Pinus taeda (Loblolly pine).